The primary structure comprises 484 residues: Calcium-dependent protein kinase 31 (484 aa).

Residue Gly-2 is the site of N-myristoyl glycine attachment. A Protein kinase domain is found at 28–290 (YILGDELGQG…AAEVLGHPWM (263 aa)). Residues 34-42 (LGQGQFGIT) and Lys-57 each bind ATP. Asp-156 acts as the Proton acceptor in catalysis. A Phosphoserine modification is found at Ser-196. The interval 295 to 325 (ASDKPIDGVVLSRLKQFRDMNKLKKVALKVI) is autoinhibitory domain. 4 consecutive EF-hand domains span residues 332-367 (EEIK…LGSN), 368-403 (LSKT…RYRL), 404-439 (DRDD…HGVG), and 444-474 (IKQI…GSSL). Positions 345, 347, 349, 351, 356, 381, 383, 385, 387, 392, 417, 419, 421, 423, 428, 452, 454, 456, 458, and 463 each coordinate Ca(2+).

It belongs to the protein kinase superfamily. Ser/Thr protein kinase family. CDPK subfamily.

It localises to the membrane. It carries out the reaction L-seryl-[protein] + ATP = O-phospho-L-seryl-[protein] + ADP + H(+). It catalyses the reaction L-threonyl-[protein] + ATP = O-phospho-L-threonyl-[protein] + ADP + H(+). With respect to regulation, activated by calcium. Autophosphorylation may play an important role in the regulation of the kinase activity. Functionally, may play a role in signal transduction pathways that involve calcium as a second messenger. This is Calcium-dependent protein kinase 31 (CPK31) from Arabidopsis thaliana (Mouse-ear cress).